The sequence spans 354 residues: Sulfate/thiosulfate import ATP-binding protein CysA (354 aa).

In terms of domain architecture, ABC transporter spans 3 to 237 (IEVRGLSKRF…PATPFVYGFL (235 aa)). 35–42 (GPSGCGKT) serves as a coordination point for ATP.

Belongs to the ABC transporter superfamily. Sulfate/tungstate importer (TC 3.A.1.6) family. The complex is composed of two ATP-binding proteins (CysA), two transmembrane proteins (CysT and CysW) and a solute-binding protein (CysP).

It is found in the cell inner membrane. It catalyses the reaction sulfate(out) + ATP + H2O = sulfate(in) + ADP + phosphate + H(+). It carries out the reaction thiosulfate(out) + ATP + H2O = thiosulfate(in) + ADP + phosphate + H(+). Part of the ABC transporter complex CysAWTP involved in sulfate/thiosulfate import. Responsible for energy coupling to the transport system. The sequence is that of Sulfate/thiosulfate import ATP-binding protein CysA from Bordetella pertussis (strain Tohama I / ATCC BAA-589 / NCTC 13251).